A 189-amino-acid chain; its full sequence is Movement protein (189 aa).

It belongs to the tombusvirus/aureusvirus movement protein p22 family.

Its subcellular location is the host membrane. In terms of biological role, transports viral genome to neighboring plant cells directly through plasmosdesmata, without any budding. The movement protein allows efficient cell to cell propagation, by bypassing the host cell wall barrier. The sequence is that of Movement protein from Artichoke mottled crinkle virus (AMCV).